The sequence spans 370 residues: Cytochrome b (370 aa).

The next 4 membrane-spanning stretches (helical) occupy residues 25–45, 69–90, 105–125, and 170–190; these read FGSM…FLAI, WIMQ…YIHI, WLSG…GYVL, and FFAL…IHII. Residues His-75 and His-89 each coordinate heme b. 2 residues coordinate heme b: His-174 and His-188. His-193 is a binding site for a ubiquinone. A run of 4 helical transmembrane segments spans residues 218–238, 280–300, 312–332, and 339–358; these read YKDM…MSFT, LGGT…PFTH, LTQI…WTAT, and FISI…IINP.

This sequence belongs to the cytochrome b family. As to quaternary structure, the cytochrome bc1 complex contains 3 respiratory subunits (MT-CYB, CYC1 and UQCRFS1), 2 core proteins (UQCRC1 and UQCRC2) and probably 6 low-molecular weight proteins. It depends on heme b as a cofactor.

The protein resides in the mitochondrion inner membrane. In terms of biological role, component of the ubiquinol-cytochrome c reductase complex (complex III or cytochrome b-c1 complex) that is part of the mitochondrial respiratory chain. The b-c1 complex mediates electron transfer from ubiquinol to cytochrome c. Contributes to the generation of a proton gradient across the mitochondrial membrane that is then used for ATP synthesis. The protein is Cytochrome b (MT-CYB) of Bungarus fasciatus (Banded krait).